The sequence spans 149 residues: Inner membrane protein YfeZ (149 aa).

Residues 1–18 (MKSTEFHPVHYDAHGRLR) are Cytoplasmic-facing. The helical transmembrane segment at 19-39 (LPLLFWLVLLLQARTWVLFVI) threads the bilayer. The Periplasmic segment spans residues 40-58 (AGASREQGTALLNLFYPDH). A helical transmembrane segment spans residues 59-79 (DNFWLGLIPGIPAVLAFLLSG). Over 80–89 (RRATFPRTWR) the chain is Cytoplasmic. The chain crosses the membrane as a helical span at residues 90–110 (VLYFLLLLAQVVLLCWQPWLW). The Periplasmic segment spans residues 111-115 (LNGES). Residues 116–136 (VSGIGLALVVADIVALIWLLT) traverse the membrane as a helical segment. Residues 137–149 (NRRLRACFYEVKE) are Cytoplasmic-facing.

It is found in the cell inner membrane. The chain is Inner membrane protein YfeZ (yfeZ) from Escherichia coli (strain K12).